Consider the following 156-residue polypeptide: 6,7-dimethyl-8-ribityllumazine synthase (156 aa).

5-amino-6-(D-ribitylamino)uracil contacts are provided by residues F22, 57–59 (AVE), and 81–83 (TVI). (2S)-2-hydroxy-3-oxobutyl phosphate is bound at residue 86–87 (GT). The active-site Proton donor is H89. Residue F114 coordinates 5-amino-6-(D-ribitylamino)uracil. (2S)-2-hydroxy-3-oxobutyl phosphate is bound at residue R128.

This sequence belongs to the DMRL synthase family. As to quaternary structure, forms an icosahedral capsid composed of 60 subunits, arranged as a dodecamer of pentamers.

It carries out the reaction (2S)-2-hydroxy-3-oxobutyl phosphate + 5-amino-6-(D-ribitylamino)uracil = 6,7-dimethyl-8-(1-D-ribityl)lumazine + phosphate + 2 H2O + H(+). It participates in cofactor biosynthesis; riboflavin biosynthesis; riboflavin from 2-hydroxy-3-oxobutyl phosphate and 5-amino-6-(D-ribitylamino)uracil: step 1/2. Catalyzes the formation of 6,7-dimethyl-8-ribityllumazine by condensation of 5-amino-6-(D-ribitylamino)uracil with 3,4-dihydroxy-2-butanone 4-phosphate. This is the penultimate step in the biosynthesis of riboflavin. In Vibrio campbellii (strain ATCC BAA-1116), this protein is 6,7-dimethyl-8-ribityllumazine synthase.